The following is a 292-amino-acid chain: 4-amino-L-phenylalanine/4-methylamino-L-phenylalanine methyltransferase (292 aa).

128–132 (CAGPG) lines the S-adenosyl-L-methionine pocket.

It belongs to the protein N5-glutamine methyltransferase family.

The enzyme catalyses 4-amino-L-phenylalanine + S-adenosyl-L-methionine = 4-methylamino-L-phenylalanine + S-adenosyl-L-homocysteine + H(+). It catalyses the reaction 4-methylamino-L-phenylalanine + S-adenosyl-L-methionine = 4-dimethylamino-L-phenylalanine + S-adenosyl-L-homocysteine + H(+). Its pathway is antibiotic biosynthesis. Involved in pristinamycin I biosynthesis. Catalyzes the SAM-dependent methylation of 4-amino-L-phenylalanine (PAPA) to 4-methylamino-L-phenylalanine (MMPAPA), and of MMPAPA to 4-dimethylamino-L-phenylalanine (DMPAPA). This is 4-amino-L-phenylalanine/4-methylamino-L-phenylalanine methyltransferase from Streptomyces pristinaespiralis.